The sequence spans 289 residues: Acetyl-coenzyme A carboxylase carboxyl transferase subunit beta (289 aa).

One can recognise a CoA carboxyltransferase N-terminal domain in the interval 24–289 (LWIKCPESGE…NSPRRAPIPA (266 aa)).

The protein belongs to the AccD/PCCB family. Acetyl-CoA carboxylase is a heterohexamer composed of biotin carboxyl carrier protein (AccB), biotin carboxylase (AccC) and two subunits each of ACCase subunit alpha (AccA) and ACCase subunit beta (AccD).

Its subcellular location is the cytoplasm. It catalyses the reaction N(6)-carboxybiotinyl-L-lysyl-[protein] + acetyl-CoA = N(6)-biotinyl-L-lysyl-[protein] + malonyl-CoA. It functions in the pathway lipid metabolism; malonyl-CoA biosynthesis; malonyl-CoA from acetyl-CoA: step 1/1. Component of the acetyl coenzyme A carboxylase (ACC) complex. Biotin carboxylase (BC) catalyzes the carboxylation of biotin on its carrier protein (BCCP) and then the CO(2) group is transferred by the transcarboxylase to acetyl-CoA to form malonyl-CoA. The sequence is that of Acetyl-coenzyme A carboxylase carboxyl transferase subunit beta from Beijerinckia indica subsp. indica (strain ATCC 9039 / DSM 1715 / NCIMB 8712).